Reading from the N-terminus, the 382-residue chain is Mannitol-1-phosphate 5-dehydrogenase (382 aa).

Residue 3–14 coordinates NAD(+); that stretch reads ALHFGAGNIGRG.

This sequence belongs to the mannitol dehydrogenase family.

It carries out the reaction D-mannitol 1-phosphate + NAD(+) = beta-D-fructose 6-phosphate + NADH + H(+). In Salmonella newport (strain SL254), this protein is Mannitol-1-phosphate 5-dehydrogenase.